Here is a 272-residue protein sequence, read N- to C-terminus: Shikimate dehydrogenase (NADP(+)) (272 aa).

Shikimate is bound by residues 14–16 (SKS) and Thr61. Catalysis depends on Lys65, which acts as the Proton acceptor. NADP(+) is bound at residue Glu77. 2 residues coordinate shikimate: Asn86 and Asp102. Residues 126–130 (GAGGA), 149–154 (NRTASR), and Met213 each bind NADP(+). Tyr215 lines the shikimate pocket. Gly237 contacts NADP(+).

This sequence belongs to the shikimate dehydrogenase family. Homodimer.

It carries out the reaction shikimate + NADP(+) = 3-dehydroshikimate + NADPH + H(+). Its pathway is metabolic intermediate biosynthesis; chorismate biosynthesis; chorismate from D-erythrose 4-phosphate and phosphoenolpyruvate: step 4/7. Its function is as follows. Involved in the biosynthesis of the chorismate, which leads to the biosynthesis of aromatic amino acids. Catalyzes the reversible NADPH linked reduction of 3-dehydroshikimate (DHSA) to yield shikimate (SA). The chain is Shikimate dehydrogenase (NADP(+)) from Salmonella typhimurium (strain LT2 / SGSC1412 / ATCC 700720).